Reading from the N-terminus, the 64-residue chain is Large ribosomal subunit protein bL33 (64 aa).

The tract at residues 19–40 is disordered; the sequence is TSTDPKRSNGVSRYTTEKNRRN.

This sequence belongs to the bacterial ribosomal protein bL33 family.

The sequence is that of Large ribosomal subunit protein bL33 from Prochlorococcus marinus (strain MIT 9215).